Here is a 317-residue protein sequence, read N- to C-terminus: Olfactory receptor 8B3 (317 aa).

The Extracellular portion of the chain corresponds to 1–32; sequence MISMLAGNGSSVTEFVLAGLTDRPELQLPLFY. Residue asparagine 8 is glycosylated (N-linked (GlcNAc...) asparagine). A helical membrane pass occupies residues 33 to 53; that stretch reads LFLIIYIITVVGNLGLIILIG. Residues 54 to 59 lie on the Cytoplasmic side of the membrane; it reads LNPHLH. Residues 60–80 form a helical membrane-spanning segment; the sequence is TPMYYFLFNLSFIDLCYSSVF. Over 81 to 97 the chain is Extracellular; sequence SPKMLINFVSEKNSISY. A helical membrane pass occupies residues 98–118; it reads AGCMTQLFLFLFFVISECYML. Over 119 to 136 the chain is Cytoplasmic; sequence TSMAYDRYVAICNPLLYK. Residues 137–157 traverse the membrane as a helical segment; the sequence is VTMSPQICSVISFAAYGMGFA. At 158–199 the chain is on the extracellular side; it reads GSSAHTGCMLRLTFCNVNVINHYLCDILPLLQLSCTSTYVNE. A helical membrane pass occupies residues 200 to 220; it reads VVVLIVVGINITVPSFTILIS. Topologically, residues 221–242 are cytoplasmic; it reads YVFILANILNIKSTQGRAKAFS. Residues 243-263 form a helical membrane-spanning segment; the sequence is TCSSHIMAISLFFGSAAFMYL. Residues 264-274 are Extracellular-facing; that stretch reads KYSSGSMEQGK. The helical transmembrane segment at 275–294 threads the bilayer; sequence ISSVFYTNVGPMLNPLIYSL. At 295–317 the chain is on the cytoplasmic side; the sequence is RNKDVKVALRKSLIKFREKTDFN.

It belongs to the G-protein coupled receptor 1 family.

Its subcellular location is the cell membrane. Functionally, odorant receptor. The polypeptide is Olfactory receptor 8B3 (Mus musculus (Mouse)).